The primary structure comprises 130 residues: Histone H2A type 1-B/E (130 aa).

A disordered region spans residues 1 to 22; that stretch reads MSGRGKQGGKARAKAKTRSSRA. Residue serine 2 is modified to N-acetylserine. Phosphoserine; by RPS6KA5 is present on serine 2. Arginine 4 carries the citrulline; alternate modification. Arginine 4 carries the post-translational modification Symmetric dimethylarginine; by PRMT5; alternate. 2 positions are modified to N6-(2-hydroxyisobutyryl)lysine; alternate: lysine 6 and lysine 10. Lysine 6 is subject to N6-acetyllysine; alternate. The span at 7–19 shows a compositional bias: basic residues; that stretch reads QGGKARAKAKTRS. N6-(beta-hydroxybutyryl)lysine; alternate is present on residues lysine 10 and lysine 14. N6-lactoyllysine; alternate is present on lysine 10. N6-succinyllysine; alternate is present on lysine 10. A Glycyl lysine isopeptide (Lys-Gly) (interchain with G-Cter in ubiquitin); alternate cross-link involves residue lysine 14. Lysine 16 participates in a covalent cross-link: Glycyl lysine isopeptide (Lys-Gly) (interchain with G-Cter in ubiquitin). Residue lysine 37 is modified to N6-(2-hydroxyisobutyryl)lysine; alternate. The residue at position 37 (lysine 37) is an N6-(beta-hydroxybutyryl)lysine; alternate. Lysine 37 bears the N6-crotonyllysine; alternate mark. N6-(2-hydroxyisobutyryl)lysine occurs at positions 75 and 76. Lysine 96 carries the N6-(2-hydroxyisobutyryl)lysine; alternate modification. Position 96 is an N6-(beta-hydroxybutyryl)lysine; alternate (lysine 96). At lysine 96 the chain carries N6-succinyllysine; alternate. Lysine 96 bears the N6-glutaryllysine; alternate mark. Glutamine 105 is modified (N5-methylglutamine). Lysine 119 is modified (N6-(2-hydroxyisobutyryl)lysine; alternate). An N6-(beta-hydroxybutyryl)lysine; alternate modification is found at lysine 119. N6-crotonyllysine; alternate occurs at positions 119 and 120. N6-glutaryllysine; alternate occurs at positions 119 and 120. A Glycyl lysine isopeptide (Lys-Gly) (interchain with G-Cter in ubiquitin); alternate cross-link involves residue lysine 120. Threonine 121 carries the post-translational modification Phosphothreonine; by DCAF1. Lysine 126 carries the N6-crotonyllysine; alternate modification. Lysine 126 is subject to N6-glutaryllysine; alternate.

This sequence belongs to the histone H2A family. As to quaternary structure, the nucleosome is a histone octamer containing two molecules each of H2A, H2B, H3 and H4 assembled in one H3-H4 heterotetramer and two H2A-H2B heterodimers. The octamer wraps approximately 147 bp of DNA. In terms of processing, deiminated on Arg-4 in granulocytes upon calcium entry. Post-translationally, monoubiquitination of Lys-120 (H2AK119Ub) by RING1, TRIM37 and RNF2/RING2 complex gives a specific tag for epigenetic transcriptional repression and participates in X chromosome inactivation of female mammals. It is involved in the initiation of both imprinted and random X inactivation. Ubiquitinated H2A is enriched in inactive X chromosome chromatin. Ubiquitination of H2A functions downstream of methylation of 'Lys-27' of histone H3 (H3K27me). H2AK119Ub by RNF2/RING2 can also be induced by ultraviolet and may be involved in DNA repair. Monoubiquitination of Lys-120 (H2AK119Ub) by TRIM37 may promote transformation of cells in a number of breast cancers. Following DNA double-strand breaks (DSBs), it is ubiquitinated through 'Lys-63' linkage of ubiquitin moieties by the E2 ligase UBE2N and the E3 ligases RNF8 and RNF168, leading to the recruitment of repair proteins to sites of DNA damage. Ubiquitination at Lys-14 and Lys-16 (H2AK13Ub and H2AK15Ub, respectively) in response to DNA damage is initiated by RNF168 that mediates monoubiquitination at these 2 sites, and 'Lys-63'-linked ubiquitin are then conjugated to monoubiquitin; RNF8 is able to extend 'Lys-63'-linked ubiquitin chains in vitro. Deubiquitinated by USP51 at Lys-14 and Lys-16 (H2AK13Ub and H2AK15Ub, respectively) after damaged DNA is repaired. H2AK119Ub and ionizing radiation-induced 'Lys-63'-linked ubiquitination (H2AK13Ub and H2AK15Ub) are distinct events. Phosphorylation on Ser-2 (H2AS1ph) is enhanced during mitosis. Phosphorylation on Ser-2 by RPS6KA5/MSK1 directly represses transcription. Acetylation of H3 inhibits Ser-2 phosphorylation by RPS6KA5/MSK1. Phosphorylation at Thr-121 (H2AT120ph) by DCAF1 is present in the regulatory region of many tumor suppresor genes and down-regulates their transcription. In terms of processing, glutamine methylation at Gln-105 (H2AQ104me) by FBL is specifically dedicated to polymerase I. It is present at 35S ribosomal DNA locus and impairs binding of the FACT complex. Post-translationally, symmetric dimethylation on Arg-4 by the PRDM1/PRMT5 complex may play a crucial role in the germ-cell lineage. Crotonylation (Kcr) is specifically present in male germ cells and marks testis-specific genes in post-meiotic cells, including X-linked genes that escape sex chromosome inactivation in haploid cells. Crotonylation marks active promoters and enhancers and confers resistance to transcriptional repressors. It is also associated with post-meiotically activated genes on autosomes. In terms of processing, lactylated in macrophages by EP300/P300 by using lactoyl-CoA directly derived from endogenous or exogenous lactate, leading to stimulates gene transcription.

It localises to the nucleus. The protein resides in the chromosome. In terms of biological role, core component of nucleosome. Nucleosomes wrap and compact DNA into chromatin, limiting DNA accessibility to the cellular machineries which require DNA as a template. Histones thereby play a central role in transcription regulation, DNA repair, DNA replication and chromosomal stability. DNA accessibility is regulated via a complex set of post-translational modifications of histones, also called histone code, and nucleosome remodeling. The chain is Histone H2A type 1-B/E from Homo sapiens (Human).